Here is a 624-residue protein sequence, read N- to C-terminus: MDLLGLKELDNNKLVSKAKENGVEFSDLFLLSSGYLRDRENASASVSSKNERMVLNEERQNCWTKRNDPKGLTYYQLLKPSEVEILSRPETRRKRMACQVFFLNYYISTIEYHKLRKERLEEFTACTSSLKQSKQKRLWKEHCGRERAFLRKKRTKIQCSHFDLLVKLGQGGYGSVWLAKKRNTHELLAMKMMKKSTLQQLNEVKHILNERDILTNTNSEWLVKLYYAFQDKEKVYLAMEYVPGGDFRTFLTTKGLLHENQTRFYLAEMVAAISAVHKLGYMHRDLKPENFLIDQKGHIKLSDFGLSTAIVTSNQVNRLQHALVSAVNPQRPYLTQKQRRNIYKALLEKNENKVNSVVGSPEYMAPEVVYGKKYDRTVDYWSLGCICYECLVGYPPFSGSTLQETWTNLYYWREMLQRPSKNENGIYDKKARSVSDEAWSFITKCLTEPTSRFQSTIEIQKHPFFKRLHWNGLRKRAVPPFVPRLENQLDTSYFDDFNDEQVLDAYKDVYEKQRKAEQKAKSNGVMNGNQRQFLGFTFKYRPNARKPLVGRHREKRQLRKEKPEKKNNSTKQKDLITVSHNKGTTAIEDLDEDKRSKTKGHKTKSSRVHRLLERKGKDLYEFLL.

Residues 162–465 (FDLLVKLGQG…TIEIQKHPFF (304 aa)) form the Protein kinase domain. ATP is bound by residues 168–176 (LGQGGYGSV) and K191. The active-site Proton acceptor is the D285. In terms of domain architecture, AGC-kinase C-terminal spans 466 to 548 (KRLHWNGLRK…KYRPNARKPL (83 aa)). Residues 545 to 559 (RKPLVGRHREKRQLR) show a composition bias toward basic residues. Residues 545-617 (RKPLVGRHRE…VHRLLERKGK (73 aa)) are disordered. Over residues 560-574 (KEKPEKKNNSTKQKD) the composition is skewed to basic and acidic residues. Residues 596–609 (SKTKGHKTKSSRVH) show a composition bias toward basic residues.

This sequence belongs to the protein kinase superfamily. Ser/Thr protein kinase family.

It localises to the cytoplasm. The protein resides in the nucleus. Its subcellular location is the nucleolus. The catalysed reaction is L-seryl-[protein] + ATP = O-phospho-L-seryl-[protein] + ADP + H(+). It catalyses the reaction L-threonyl-[protein] + ATP = O-phospho-L-threonyl-[protein] + ADP + H(+). In terms of biological role, has a role in meiosis. This chain is Serine/threonine-protein kinase ppk35 (ppk35), found in Schizosaccharomyces pombe (strain 972 / ATCC 24843) (Fission yeast).